A 63-amino-acid polypeptide reads, in one-letter code: Cytochrome c oxidase subunit 7C, mitochondrial (63 aa).

The N-terminal 16 residues, 1–16, are a transit peptide targeting the mitochondrion; that stretch reads MLGQSIRRFTTSVVRR. Over 17–34 the chain is Mitochondrial matrix; that stretch reads SHYEEGPGKNLPFSVENK. Lysine 25 bears the N6-acetyllysine; alternate mark. Lysine 25 is modified (N6-succinyllysine; alternate). A helical membrane pass occupies residues 35–57; the sequence is WRLLAMMTVYFGSGFAAPFFIVR. Over 58 to 63 the chain is Mitochondrial intermembrane; the sequence is HQLLKK.

Belongs to the cytochrome c oxidase VIIc family. In terms of assembly, component of the cytochrome c oxidase (complex IV, CIV), a multisubunit enzyme composed of 14 subunits. The complex is composed of a catalytic core of 3 subunits MT-CO1, MT-CO2 and MT-CO3, encoded in the mitochondrial DNA, and 11 supernumerary subunits COX4I, COX5A, COX5B, COX6A, COX6B, COX6C, COX7A, COX7B, COX7C, COX8 and NDUFA4, which are encoded in the nuclear genome. The complex exists as a monomer or a dimer and forms supercomplexes (SCs) in the inner mitochondrial membrane with NADH-ubiquinone oxidoreductase (complex I, CI) and ubiquinol-cytochrome c oxidoreductase (cytochrome b-c1 complex, complex III, CIII), resulting in different assemblies (supercomplex SCI(1)III(2)IV(1) and megacomplex MCI(2)III(2)IV(2)). Interacts with RAB5IF.

Its subcellular location is the mitochondrion inner membrane. It functions in the pathway energy metabolism; oxidative phosphorylation. Component of the cytochrome c oxidase, the last enzyme in the mitochondrial electron transport chain which drives oxidative phosphorylation. The respiratory chain contains 3 multisubunit complexes succinate dehydrogenase (complex II, CII), ubiquinol-cytochrome c oxidoreductase (cytochrome b-c1 complex, complex III, CIII) and cytochrome c oxidase (complex IV, CIV), that cooperate to transfer electrons derived from NADH and succinate to molecular oxygen, creating an electrochemical gradient over the inner membrane that drives transmembrane transport and the ATP synthase. Cytochrome c oxidase is the component of the respiratory chain that catalyzes the reduction of oxygen to water. Electrons originating from reduced cytochrome c in the intermembrane space (IMS) are transferred via the dinuclear copper A center (CU(A)) of subunit 2 and heme A of subunit 1 to the active site in subunit 1, a binuclear center (BNC) formed by heme A3 and copper B (CU(B)). The BNC reduces molecular oxygen to 2 water molecules using 4 electrons from cytochrome c in the IMS and 4 protons from the mitochondrial matrix. The protein is Cytochrome c oxidase subunit 7C, mitochondrial (Cox7c) of Mus musculus (Mouse).